The chain runs to 983 residues: Next to BRCA1 gene 1 protein (983 aa).

The 83-residue stretch at 4 to 86 (QVTLNVTFKN…NQLQMQVHEG (83 aa)) folds into the PB1 domain. Ser117 is modified (phosphoserine). A disordered region spans residues 126–149 (MKTTEEPTAEARSPVPCDTDKPQD). A ZZ-type zinc finger spans residues 214–266 (SWHIACSHCQKRIVGVRYQCSLCPSYNICEDCEAGPYSHDTNHILLKFRRPVV). Zn(2+) contacts are provided by Cys219, Cys222, Cys233, Cys236, Cys242, Cys245, His252, and His256. ATG8 family proteins-binding stretches follow at residues 544–638 (ASER…PASV) and 745–756 (ASSEDYIIILPE). A Phosphothreonine modification is found at Thr588. A phosphoserine mark is found at Ser592 and Ser598. The interval 611-645 (EESEGAGLKASPDSTVLTKRKAETPASVEETEEDL) is disordered. The segment at 768-813 (MYSSALSQPGLERGAEGEPGIESGQEPAEARERLPERESQPKEQSI) is disordered. The span at 795 to 808 (AEARERLPERESQP) shows a compositional bias: basic and acidic residues. Residue Ser855 is modified to Phosphoserine. A disordered region spans residues 867–894 (DHVRGEPRGSTGLANSRQKSCDHSRHHN). In terms of domain architecture, UBA spans 930 to 974 (SEDQTAALMAHLFEMGFCDRQLNLRLLRKHNHNILQVVTELLQVN).

As to quaternary structure, homooligomer and heterooligomer. Interacts with TRIM55. Interacts with titin/TTN. Interacts with RNF29, USP8, MAP1LC3A, MAP1LC3B, MAP1LC3C, GABARAP, GABARAPL1 and GABARAPL2. Binds to ubiquitin and ubiquitinated proteins. Interacts with SQSTM1. Interacts with TAX1BP1. Interacts with IRF3; this interaction mediates autophagic degradation of IRF3. Interacts with IL12A and IL12B. In terms of processing, phosphorylated by GSK3A; this phosphorylation inhibits NBR1 involvement in the formation of ubiquitinated protein aggregates.

It localises to the cytoplasm. The protein localises to the cytoplasmic vesicle. Its subcellular location is the autophagosome. It is found in the lysosome. The protein resides in the myofibril. It localises to the sarcomere. The protein localises to the m line. Ubiquitin-binding autophagy adapter that participates in different processes including host defense or intracellular homeostasis. Possesses a double function during the selective autophagy by acting as a shuttle bringing ubiquitinated proteins to autophagosomes and also by participating in the formation of protein aggregates. Plays a role in the regulation of the innate immune response by modulating type I interferon production and targeting ubiquitinated IRF3 for autophagic degradation. In response to oxidative stress, promotes an increase in SQSTM1 levels, phosphorylation, and body formation by preventing its autophagic degradation. In turn, activates the KEAP1-NRF2/NFE2L2 antioxidant pathway. Also plays non-autophagy role by mediating the shuttle of IL-12 to late endosome for subsequent secretion. The protein is Next to BRCA1 gene 1 protein (Nbr1) of Rattus norvegicus (Rat).